A 39-amino-acid polypeptide reads, in one-letter code: Pro-opiomelanocortin (39 aa).

Position 1 is an N-acetylserine (serine 1). Valine 13 carries the post-translational modification Valine amide. The residue at position 31 (serine 31) is a Phosphoserine.

It belongs to the POMC family. As to expression, expressed in the pituitary gland.

It localises to the secreted. Precursor protein for pituitary hormones that regulate stress and environmental adaptation. Functionally, stimulates the adrenal glands to release cortisol. Its function is as follows. Anorexigenic peptide. Increases the pigmentation of skin by increasing melanin production in melanocytes. This is Pro-opiomelanocortin (POMC) from Oryctolagus cuniculus (Rabbit).